The primary structure comprises 720 residues: Casein kinase II subunit alpha'-interacting protein (720 aa).

Positions 227 to 249 (LSSPSFTNRLQRNSFPPTSSSLE) are enriched in polar residues. 5 disordered regions span residues 227–250 (LSSP…SLEF), 264–303 (KPLK…SRRL), 333–366 (QNTA…SPKP), 602–640 (TQVQ…VDPT), and 678–698 (LRQS…KCLK). Positions 608 to 626 (SSSSSSSCSSVSSSSSASS) are enriched in low complexity. Positions 630–640 (PSPPTPWVDPT) are enriched in pro residues. Basic residues predominate over residues 687–698 (KPVRSHNSKCLK).

As to quaternary structure, interacts (via C-terminus) with CSNK2A2. Post-translationally, phosphorylated by CK2 (casein kinase II), specifically by complexes containing catalytic subunit CSNK2A2. Expressed exclusively in testis (at protein level). Within testis, expressed mainly in the intermediate compartment of the seminiferous tubules with weaker expression in the basal and adluminal compartments.

The protein resides in the nucleus. In terms of biological role, may play a role in chromatin regulation of male germ cells. This Mus musculus (Mouse) protein is Casein kinase II subunit alpha'-interacting protein.